We begin with the raw amino-acid sequence, 364 residues long: Alanine racemase (364 aa).

Lys34 acts as the Proton acceptor; specific for D-alanine in catalysis. At Lys34 the chain carries N6-(pyridoxal phosphate)lysine. Arg129 serves as a coordination point for substrate. The active-site Proton acceptor; specific for L-alanine is Tyr259. Position 307 (Met307) interacts with substrate.

The protein belongs to the alanine racemase family. It depends on pyridoxal 5'-phosphate as a cofactor.

The enzyme catalyses L-alanine = D-alanine. It functions in the pathway amino-acid biosynthesis; D-alanine biosynthesis; D-alanine from L-alanine: step 1/1. Catalyzes the interconversion of L-alanine and D-alanine. May also act on other amino acids. This is Alanine racemase (alr) from Coxiella burnetii (strain Dugway 5J108-111).